Consider the following 637-residue polypeptide: Chaperone protein DnaK (637 aa).

The residue at position 198 (T198) is a Phosphothreonine; by autocatalysis. The segment at 597-637 (MYAKTSQAGAGPQPGAGPGTGGQGPGKKDEDVVDADFEEVK) is disordered. The span at 608 to 621 (PQPGAGPGTGGQGP) shows a compositional bias: gly residues. Acidic residues predominate over residues 627–637 (DVVDADFEEVK).

The protein belongs to the heat shock protein 70 family.

Acts as a chaperone. This Syntrophus aciditrophicus (strain SB) protein is Chaperone protein DnaK.